A 462-amino-acid chain; its full sequence is Argininosuccinate lyase (462 aa).

This sequence belongs to the lyase 1 family. Argininosuccinate lyase subfamily.

The protein localises to the cytoplasm. The catalysed reaction is 2-(N(omega)-L-arginino)succinate = fumarate + L-arginine. It participates in amino-acid biosynthesis; L-arginine biosynthesis; L-arginine from L-ornithine and carbamoyl phosphate: step 3/3. In Leuconostoc citreum (strain KM20), this protein is Argininosuccinate lyase.